Here is a 55-residue protein sequence, read N- to C-terminus: Omega-ctenitoxin-Pr2a (55 aa).

5 cysteine pairs are disulfide-bonded: cysteine 2/cysteine 16, cysteine 9/cysteine 22, cysteine 15/cysteine 37, cysteine 24/cysteine 35, and cysteine 45/cysteine 52.

In terms of tissue distribution, expressed by the venom gland.

It is found in the secreted. Its function is as follows. Antagonist of L-type calcium channels (Cav1/CACNA1). In vivo, causes paralysis in posterior limbs, and gradual decrease in movement and aggression during 24 hours after intracerebroventricular injection in mice at dose levels of 3 ug per mouse. The sequence is that of Omega-ctenitoxin-Pr2a from Phoneutria reidyi (Brazilian Amazonian armed spider).